The primary structure comprises 333 residues: Ribosomal RNA small subunit methyltransferase H (333 aa).

S-adenosyl-L-methionine is bound by residues 42–44, aspartate 62, phenylalanine 86, aspartate 105, and glutamine 112; that span reads GGH.

This sequence belongs to the methyltransferase superfamily. RsmH family.

It localises to the cytoplasm. The enzyme catalyses cytidine(1402) in 16S rRNA + S-adenosyl-L-methionine = N(4)-methylcytidine(1402) in 16S rRNA + S-adenosyl-L-homocysteine + H(+). Its function is as follows. Specifically methylates the N4 position of cytidine in position 1402 (C1402) of 16S rRNA. The protein is Ribosomal RNA small subunit methyltransferase H of Cupriavidus necator (strain ATCC 17699 / DSM 428 / KCTC 22496 / NCIMB 10442 / H16 / Stanier 337) (Ralstonia eutropha).